The following is a 313-amino-acid chain: MFKIIDLFAGIGGIRLGFEQAFDDVRCVFSSEIDKYAVQTYQANHGGETVCGDITQTDVADIPDHDILSAGFPCQPFSQAGLKKGFADTRGTLFFDIERILLAKKPQAFLLENVKQLKGHDKGRTLQVILAHLQQAGYKVYTEVLKARDFGIPQNRERIYLVGFLNHDVDFRFPQPIGQATAVGDILEAYPDEKYTISDKLWQGYQRRKAENRAAGKGFGYGLFNAESAYTNTISARYYKDGSEILIEQPGKNPRKITPPEAARLQGFPDSFQIPVSDAQAYRQFGNSVCVPVIRAIAEQMKAALSAVSDRKV.

The SAM-dependent MTase C5-type domain maps to 2-308 (FKIIDLFAGI…EQMKAALSAV (307 aa)). Residue Cys-74 is part of the active site.

This sequence belongs to the class I-like SAM-binding methyltransferase superfamily. C5-methyltransferase family.

The enzyme catalyses a 2'-deoxycytidine in DNA + S-adenosyl-L-methionine = a 5-methyl-2'-deoxycytidine in DNA + S-adenosyl-L-homocysteine + H(+). Functionally, a methylase, recognizes the double-stranded sequence 5'-CCNGG-3' and methylates C-2 on both strands. May be the equivalent of dcm in this bacteria, or it may protect the DNA from cleavage by the putative NlaXP endonuclease. The chain is Type II methyltransferase M.NlaX (nlaXM) from Neisseria lactamica.